We begin with the raw amino-acid sequence, 408 residues long: MVQVNSNYLKLKAGYLFPEIARRIKSFSEANPDAALIRLGIGDVTEPLPLACRNAMKVAIDEMGTNTGFHGYGPEQGYDWLRKAIAKHDFQTKGCQINAEEIFVSDGSKCDSSNILDILGSSNRIAVTDPVYPVYVDSNVMAGRTGDANQSGRYAGLSYLPINAENGFAAKIPSEPVDLIYLCFPNNPTGAVATRAQLQEWVNYARTNSVLILFDAAYEAFIQNPDLPHSIYEIEGARECAIEFRSFSKNAGFTGTRCAFTVVPKGLKGKSDDGSDVELWNLWNRRQSTKFNGVSYIIQRGAEAVYSAQGQGEINALVSFYMRNAAIIRRELTAAGIEVHGGEHAPYVWLKTPDDMDSWGFFDHLLQNAHVVGTPGSGFGAAGEGYFRLSAFNSRVNVDEAMRRIRAL.

2 residues coordinate substrate: Tyr-15 and Gly-42. Pyridoxal 5'-phosphate contacts are provided by residues Tyr-72, 108–109 (SK), Tyr-132, Asn-187, Tyr-218, and 246–248 (SFS). Residues Lys-109, Tyr-132, and Asn-187 each contribute to the substrate site. Lys-249 bears the N6-(pyridoxal phosphate)lysine mark. Pyridoxal 5'-phosphate is bound by residues Arg-257 and Asn-292. 2 residues coordinate substrate: Asn-292 and Arg-388.

Belongs to the class-I pyridoxal-phosphate-dependent aminotransferase family. LL-diaminopimelate aminotransferase subfamily. In terms of assembly, homodimer. It depends on pyridoxal 5'-phosphate as a cofactor.

It catalyses the reaction (2S,6S)-2,6-diaminopimelate + 2-oxoglutarate = (S)-2,3,4,5-tetrahydrodipicolinate + L-glutamate + H2O + H(+). The protein operates within amino-acid biosynthesis; L-lysine biosynthesis via DAP pathway; LL-2,6-diaminopimelate from (S)-tetrahydrodipicolinate (aminotransferase route): step 1/1. Its function is as follows. Involved in the synthesis of meso-diaminopimelate (m-DAP or DL-DAP), required for both lysine and peptidoglycan biosynthesis. Catalyzes the direct conversion of tetrahydrodipicolinate to LL-diaminopimelate. This chain is LL-diaminopimelate aminotransferase, found in Prochlorococcus marinus (strain MIT 9313).